A 186-amino-acid polypeptide reads, in one-letter code: Glutathione peroxidase 7 (186 aa).

A signal peptide spans 1-18; that stretch reads MVAAVATAWLLLWAAACA. The active site involves cysteine 56.

Belongs to the glutathione peroxidase family.

The protein localises to the secreted. It catalyses the reaction 2 glutathione + H2O2 = glutathione disulfide + 2 H2O. It protects esophageal epithelia from hydrogen peroxide-induced oxidative stress. It suppresses acidic bile acid-induced reactive oxygen species (ROS) and protects against oxidative DNA damage and double-strand breaks. This Mus musculus (Mouse) protein is Glutathione peroxidase 7 (Gpx7).